The chain runs to 274 residues: MIRLENVSYNYPDGTPALRNINIGIKKGEYIGITGKNGSGKSTLALHLNGLLRPQKGKVLVRGMDTGDFSKLQGIRKLVGIVFQNPETQFVGRTVEEDLAFGPENLCLPPIEIRKRVDRALAEIGLGKYRYRSPKTLSGGQGQCVALAGILTMEPDCLIFDEVTSMLDPDSGKAVLERVKRLHEKGKTIVYITHNLEELQAADRIIVMDRGKIVLEGTPENVLSDLSLRYLGLTPPSLIELAERLKNHGVAVPWEKTSSPSSFAEEICRLFLKT.

Residues 2–235 (IRLENVSYNY…LSLRYLGLTP (234 aa)) form the ABC transporter domain. 35-42 (GKNGSGKS) provides a ligand contact to ATP.

This sequence belongs to the ABC transporter superfamily. Energy-coupling factor EcfA family. As to quaternary structure, forms a stable energy-coupling factor (ECF) transporter complex composed of 2 membrane-embedded substrate-binding proteins (S component), 2 ATP-binding proteins (A component) and 2 transmembrane proteins (T component).

It is found in the cell membrane. Functionally, ATP-binding (A) component of a common energy-coupling factor (ECF) ABC-transporter complex. Unlike classic ABC transporters this ECF transporter provides the energy necessary to transport a number of different substrates. The polypeptide is Energy-coupling factor transporter ATP-binding protein EcfA (Methanosarcina acetivorans (strain ATCC 35395 / DSM 2834 / JCM 12185 / C2A)).